Here is a 194-residue protein sequence, read N- to C-terminus: Bis(5'-nucleosyl)-tetraphosphatase, symmetrical (194 aa).

Residues 18 to 132 (RYNHSLRVAE…IFIADYIEPG (115 aa)) enclose the HD domain. His-21 contacts ADP. Residues His-21, His-50, and Asp-51 each contribute to the Fe cation site. Residues 51 to 54 (DFCK), His-83, 109 to 110 (HT), Asp-127, Arg-133, and 172 to 177 (TVYNKT) contribute to the ADP site. Asp-127 contacts Fe cation.

Belongs to the Ap4A hydrolase YqeK family. In terms of assembly, homodimer.

It catalyses the reaction P(1),P(4)-bis(5'-adenosyl) tetraphosphate + H2O = 2 ADP + 2 H(+). With respect to regulation, inhibited by EDTA. In terms of biological role, hydrolyzes diadenosine 5',5'''-P1,P4-tetraphosphate (Ap4A) to yield ADP. Can also hydrolyze Ap3A, Ap5A, Ap4G, Ap4U and Gp4G, always releasing ADP or GDP as one of the products, but it exhibits a marked preference for Ap4A, which is mainly exerted at the substrate affinity level. The polypeptide is Bis(5'-nucleosyl)-tetraphosphatase, symmetrical (Staphylococcus aureus (strain NCTC 8325 / PS 47)).